The following is a 65-amino-acid chain: Large ribosomal subunit protein bL33c (65 aa).

The protein belongs to the bacterial ribosomal protein bL33 family.

Its subcellular location is the plastid. It localises to the chloroplast. This is Large ribosomal subunit protein bL33c from Pyropia yezoensis (Susabi-nori).